Here is a 181-residue protein sequence, read N- to C-terminus: MQFTILNEPSLDSQRREGDLASENYVFGDIRKEGVRILEDSLRSERNALLAIGAGGAADRVKQHYRKLLDDWEAAIMEIRSNDKYESLCCGFAIEKAEVETEMRNTEELDVYKECLVSECFDKKKRRHIPESSKELLEKAFKVKRFPNSKERERIARECGISPLQVRVWFTNKRARSKSRA.

The homeobox DNA-binding region spans 122–181 (DKKKRRHIPESSKELLEKAFKVKRFPNSKERERIARECGISPLQVRVWFTNKRARSKSRA).

It belongs to the MATA1 family.

It is found in the nucleus. In terms of biological role, mating type proteins are sequence specific DNA-binding proteins that act as master switches in yeast differentiation by controlling gene expression in a cell type-specific fashion. The protein is Mating-type protein A1 (MATA1) of Pichia angusta (Yeast).